The chain runs to 268 residues: MAKVPDLFEDLKNCYSENEDYSSEIDHLSLNQKSFYDASYGPLREDHMNKFMSLDTSETSKTSRLSFKENVVMVTANGKILKKRRLSLNQFITDDDLEAIANDTEEEIIKPRSAHYSFQSNVKYNFMRVIHQECILNDALNQSIIRDMSGPYLMAATLNNLEEAVKFDMVAYVSEEDSQLPVTLRISKTQLFVSAQNEDEPVLLKEMPETPKIIKDETNLLFFWEKHGSMDYFKSVAHPKLFIATKQEKLVHMASGPPSITDFQILEK.

The propeptide occupies 1 to 112 (MAKVPDLFED…DTEEEIIKPR (112 aa)). Lys82 carries the N6-acetyllysine modification. The interval 82 to 86 (KKRRL) is nuclear localization signal (NLS). Position 87 is a phosphoserine (Ser87). N-linked (GlcNAc...) asparagine glycans are attached at residues Asn102 and Asn141.

The protein belongs to the IL-1 family. In terms of assembly, monomer. Interacts with TMED10; the interaction mediates the translocation from the cytoplasm into the ERGIC (endoplasmic reticulum-Golgi intermediate compartment) and thereby secretion. Interacts with IL1R1. Interacts with S100A13; this interaction is the first step in the export of IL1A, followed by direct translocation of this complex across the plasma membrane. Acetylated within its nuclear localization sequence, which impacts subcellular localization. Post-translationally, proteolytic processed by CAPN1 in a calcium-dependent manner. Cleavage from 31 kDa precursor to 18 kDa biologically active molecules. In terms of processing, phosphorylated. Phosphorylation greatly enhances susceptibility to digestion and promotes the conversion of pre-IL1A alpha to the biologically active IL1A.

It is found in the nucleus. The protein resides in the cytoplasm. The protein localises to the secreted. Its function is as follows. Cytokine constitutively present intracellularly in nearly all resting non-hematopoietic cells that plays an important role in inflammation and bridges the innate and adaptive immune systems. After binding to its receptor IL1R1 together with its accessory protein IL1RAP, forms the high affinity interleukin-1 receptor complex. Signaling involves the recruitment of adapter molecules such as MYD88, IRAK1 or IRAK4. In turn, mediates the activation of NF-kappa-B and the three MAPK pathways p38, p42/p44 and JNK pathways. Within the cell, acts as an alarmin and cell death results in its liberation in the extracellular space after disruption of the cell membrane to induce inflammation and alert the host to injury or damage. In addition to its role as a danger signal, which occurs when the cytokine is passively released by cell necrosis, directly senses DNA damage and acts as signal for genotoxic stress without loss of cell integrity. The chain is Interleukin-1 alpha (IL1A) from Capra hircus (Goat).